The sequence spans 458 residues: 5-hydroxytryptamine receptor 2C (458 aa).

Positions 1–32 (MVNLRNAVHSFLVHLIGLLVWQSDISVSPVAA) are cleaved as a signal peptide. Topologically, residues 33-55 (IVTDIFNTSDGGRFKFPDGVQNW) are extracellular. N-linked (GlcNAc...) asparagine glycosylation is present at asparagine 39. A helical transmembrane segment spans residues 56-80 (PALSIVIIIIMTIGGNILVIMAVSM). Topologically, residues 81–86 (EKKLHN) are cytoplasmic. A helical transmembrane segment spans residues 87–111 (ATNYFLMSLAIADMLVGLLVMPLSL). Topologically, residues 112–128 (LAILYDYVWPLPRYLCP) are extracellular. Cysteine 127 and cysteine 207 form a disulfide bridge. A helical membrane pass occupies residues 129 to 151 (VWISLDVLFSTASIMHLCAISLD). Ergotamine is bound at residue threonine 139. Positions 151-153 (DRY) match the DRY motif; important for ligand-induced conformation changes motif. Residues 152–167 (RYVAIRNPIEHSRFNS) are Cytoplasmic-facing. Residues 168–189 (RTKAIMKIAIVWAISIGVSVPI) form a helical membrane-spanning segment. Over 190–213 (PVIGLRDEEKVFVNNTTCVLNDPN) the chain is Extracellular. A glycan (N-linked (GlcNAc...) asparagine) is linked at asparagine 204. Leucine 209 contacts ergotamine. A helical membrane pass occupies residues 214 to 236 (FVLIGSFVAFFIPLTIMVITYCL). The Cytoplasmic portion of the chain corresponds to 237 to 311 (TIYVLRRQAL…AINNERKASK (75 aa)). The segment at 274 to 301 (EENSANPNQDQNARRRKKKERRPRGTMQ) is disordered. Basic residues predominate over residues 287 to 297 (RRRKKKERRPR). A helical transmembrane segment spans residues 312–336 (VLGIVFFVFLIMWCPFFITNILSVL). Cysteine 337 and cysteine 341 form a disulfide bridge. Topologically, residues 337–347 (CEKSCNQKLME) are extracellular. A helical membrane pass occupies residues 348-370 (KLLNVFVWIGYVCSGINPLVYTL). The NPxxY motif; important for ligand-induced conformation changes and signaling motif lies at 364–368 (NPLVY). The Cytoplasmic segment spans residues 371–458 (FNKIYRRAFS…SVVSERISSV (88 aa)). The short motif at 456–458 (SSV) is the PDZ-binding element.

It belongs to the G-protein coupled receptor 1 family. Interacts with MPDZ. Interacts with ARRB2. Interacts with MPP3; this interaction stabilizes the receptor at the plasma membrane and prevents the desensitization of the HTR2C receptor-mediated calcium response. Post-translationally, N-glycosylated. As to expression, detected in brain.

The protein localises to the cell membrane. Its activity is regulated as follows. Inhibited by inverse agonist ritanserin. Its function is as follows. G-protein coupled receptor for 5-hydroxytryptamine (serotonin). Also functions as a receptor for various drugs and psychoactive substances, including ergot alkaloid derivatives, 1-2,5,-dimethoxy-4-iodophenyl-2-aminopropane (DOI) and lysergic acid diethylamide (LSD). Ligand binding causes a conformation change that triggers signaling via guanine nucleotide-binding proteins (G proteins) and modulates the activity of downstream effectors. HTR2C is coupled to G(q)/G(11) G alpha proteins and activates phospholipase C-beta, releasing diacylglycerol (DAG) and inositol 1,4,5-trisphosphate (IP3) second messengers that modulate the activity of phosphatidylinositol 3-kinase and promote the release of Ca(2+) ions from intracellular stores, respectively. Beta-arrestin family members inhibit signaling via G proteins and mediate activation of alternative signaling pathways. Regulates neuronal activity via the activation of short transient receptor potential calcium channels in the brain, and thereby modulates the activation of pro-opiomelanocortin neurons and the release of CRH that then regulates the release of corticosterone. Plays a role in the regulation of appetite and eating behavior, responses to anxiogenic stimuli and stress. Plays a role in insulin sensitivity and glucose homeostasis. This Homo sapiens (Human) protein is 5-hydroxytryptamine receptor 2C.